Consider the following 307-residue polypeptide: Pantothenate kinase (307 aa).

ATP is bound at residue G90–S97.

This sequence belongs to the prokaryotic pantothenate kinase family.

Its subcellular location is the cytoplasm. The catalysed reaction is (R)-pantothenate + ATP = (R)-4'-phosphopantothenate + ADP + H(+). It participates in cofactor biosynthesis; coenzyme A biosynthesis; CoA from (R)-pantothenate: step 1/5. This is Pantothenate kinase from Limosilactobacillus reuteri subsp. reuteri (strain JCM 1112) (Lactobacillus reuteri).